We begin with the raw amino-acid sequence, 493 residues long: EGF-containing fibulin-like extracellular matrix protein 1 (493 aa).

A signal peptide spans 1-17; it reads MLQTLFLTMLTLALVKS. Positions 26-71 constitute an EGF-like 1; atypical domain; that stretch reads YTQCTDGYEWDPIRQQCKDIDECDIVPDACKGGMKCVNHYGGYLCL. The EGF-like 2; calcium-binding domain maps to 173-213; it reads DIDECTSGTHNCRTDQVCINLRGSFTCQCLPGYQKRGEQCV. Disulfide bonds link cysteine 177–cysteine 190, cysteine 184–cysteine 199, cysteine 201–cysteine 212, cysteine 218–cysteine 228, cysteine 224–cysteine 237, cysteine 239–cysteine 252, cysteine 258–cysteine 268, cysteine 264–cysteine 277, cysteine 279–cysteine 292, cysteine 298–cysteine 309, cysteine 305–cysteine 318, cysteine 320–cysteine 332, cysteine 338–cysteine 350, cysteine 344–cysteine 359, and cysteine 365–cysteine 377. Residues 214-253 enclose the EGF-like 3; calcium-binding domain; the sequence is DIDECTVPPYCHQRCVNTPGSFYCQCSPGFQLAANNYTCV. The N-linked (GlcNAc...) asparagine glycan is linked to asparagine 249. An EGF-like 4; calcium-binding domain is found at 254–293; the sequence is DINECDASNQCAQQCYNILGSFICQCNQGYELSSDRLNCE. Residues 259-493 are mediates interaction with TIMP3; the sequence is DASNQCAQQC…LTIIVGPFSF (235 aa). In terms of domain architecture, EGF-like 5; calcium-binding spans 294-333; sequence DIDECRTSSYLCQYQCVNEPGKFSCMCPQGYEVVRSRTCQ. The EGF-like 6; calcium-binding domain maps to 334 to 378; the sequence is DINECETTNECREDEMCWNYHGGFRCYPRNPCQDHYVLTSENRCV.

It belongs to the fibulin family. Interacts with ECM1. Interacts with TIMP3. In terms of tissue distribution, expressed in the eye in the ciliary body, cornea, inner nuclear layer of the retina, and in the optic disk.

It is found in the secreted. The protein resides in the extracellular space. Its subcellular location is the extracellular matrix. Functionally, binds EGFR, the EGF receptor, inducing EGFR autophosphorylation and the activation of downstream signaling pathways. May play a role in cell adhesion and migration. May function as a negative regulator of chondrocyte differentiation. In the olfactory epithelium, it may regulate glial cell migration, differentiation and the ability of glial cells to support neuronal neurite outgrowth. The polypeptide is EGF-containing fibulin-like extracellular matrix protein 1 (Efemp1) (Mus musculus (Mouse)).